A 357-amino-acid polypeptide reads, in one-letter code: MSISAAGVATGLGANVELKSNVGSSSSSVAGVRLFTSRKAQLRRCAAPATSASLYSDANYDLNNYKFAPIKESIVAREMTRRYMTDMITHADTDVVVVGAGSAGLSCAYELSKNPNVKVAIVEQSVSPGGGAWLGGQLFSAMIVRKPAHRFLDEIEVPYEEMENYVVIKHAALFTSTIMSKLLARPNVKLFNAVAAEDLIIRGDRVSGVVTNWALVAQNHNTQSCMDPNVMEAKVVVSSCGHDGPFGATGVKRLRSIGMIESVPGMKCLDMNAAEDAIVKHTREVVPGMIVTGMEVAEIDGSPRMGPTFGAMMISGQKAAHLALRALGLPNEVDGNYKPNVHPELVLASTDDMTASA.

A chloroplast-targeting transit peptide spans 1 to 51 (MSISAAGVATGLGANVELKSNVGSSSSSVAGVRLFTSRKAQLRRCAAPATS). Substrate contacts are provided by residues Ala103, 123–124 (EQ), Gly131, and Ala196. Cys225 carries the 2,3-didehydroalanine (Cys) modification. Substrate contacts are provided by residues Asp227, His242, Met294, and 304–306 (RMG).

Belongs to the THI4 family. As to quaternary structure, homooctamer. Requires Fe cation as cofactor. In terms of processing, during the catalytic reaction, a sulfide is transferred from Cys-225 to a reaction intermediate, generating a dehydroalanine residue.

Its subcellular location is the plastid. It is found in the chloroplast. It carries out the reaction [ADP-thiazole synthase]-L-cysteine + glycine + NAD(+) = [ADP-thiazole synthase]-dehydroalanine + ADP-5-ethyl-4-methylthiazole-2-carboxylate + nicotinamide + 3 H2O + 2 H(+). Involved in biosynthesis of the thiamine precursor thiazole. Catalyzes the conversion of NAD and glycine to adenosine diphosphate 5-(2-hydroxyethyl)-4-methylthiazole-2-carboxylic acid (ADT), an adenylated thiazole intermediate. The reaction includes an iron-dependent sulfide transfer from a conserved cysteine residue of the protein to a thiazole intermediate. The enzyme can only undergo a single turnover, which suggests it is a suicide enzyme. May have additional roles in adaptation to various stress conditions and in DNA damage tolerance. This is Thiamine thiazole synthase 3, chloroplastic from Physcomitrium patens (Spreading-leaved earth moss).